The primary structure comprises 275 residues: MTIHKAVKRITASEIRSRKGQEPIVSLTAYQAYSARIADPYCDLLLVGDSVGMVVHGFETTLPVSLDMMILHGQAVMRGSKRALVVVDMPFGSYEESPEQAFSNASRILAETGCSAVKLEGGVYIAETIDFLCKRGIPVMSHVGLTPQAVNRFGGFKTQGRNESNWQQIEADAAAIEKAGAFAVVVEGVVEPLAVKLTQMLSIPTIGIGASSQCDGQILVMEDMLGYGTWVPKFVRRYGVLEQEMEKAIKSYADDVKSRTFPSDEEIYKLKQKSG.

The Mg(2+) site is built by Asp49 and Asp88. 3-methyl-2-oxobutanoate is bound by residues 49-50, Asp88, and Lys118; that span reads DS. Mg(2+) is bound at residue Glu120. Glu187 serves as the catalytic Proton acceptor.

It belongs to the PanB family. In terms of assembly, homodecamer; pentamer of dimers. Mg(2+) serves as cofactor.

The protein resides in the cytoplasm. It carries out the reaction 3-methyl-2-oxobutanoate + (6R)-5,10-methylene-5,6,7,8-tetrahydrofolate + H2O = 2-dehydropantoate + (6S)-5,6,7,8-tetrahydrofolate. It functions in the pathway cofactor biosynthesis; (R)-pantothenate biosynthesis; (R)-pantoate from 3-methyl-2-oxobutanoate: step 1/2. Catalyzes the reversible reaction in which hydroxymethyl group from 5,10-methylenetetrahydrofolate is transferred onto alpha-ketoisovalerate to form ketopantoate. In Bartonella henselae (strain ATCC 49882 / DSM 28221 / CCUG 30454 / Houston 1) (Rochalimaea henselae), this protein is 3-methyl-2-oxobutanoate hydroxymethyltransferase.